Consider the following 600-residue polypeptide: Aspartate--tRNA(Asp/Asn) ligase (600 aa).

Residue E187 coordinates L-aspartate. Residues 211–214 are aspartate; the sequence is QIFK. L-aspartate is bound by residues R233 and H463. Residue 233-235 coordinates ATP; the sequence is RDE. E497 is a binding site for ATP. An L-aspartate-binding site is contributed by R504. Position 549–552 (549–552) interacts with ATP; the sequence is GVDR.

The protein belongs to the class-II aminoacyl-tRNA synthetase family. Type 1 subfamily. In terms of assembly, homodimer.

Its subcellular location is the cytoplasm. It carries out the reaction tRNA(Asx) + L-aspartate + ATP = L-aspartyl-tRNA(Asx) + AMP + diphosphate. Its function is as follows. Aspartyl-tRNA synthetase with relaxed tRNA specificity since it is able to aspartylate not only its cognate tRNA(Asp) but also tRNA(Asn). Reaction proceeds in two steps: L-aspartate is first activated by ATP to form Asp-AMP and then transferred to the acceptor end of tRNA(Asp/Asn). This chain is Aspartate--tRNA(Asp/Asn) ligase, found in Wolbachia pipientis subsp. Culex pipiens (strain wPip).